Here is a 386-residue protein sequence, read N- to C-terminus: Phosphomevalonate dehydratase large subunit (386 aa).

7 residues coordinate (R)-5-phosphomevalonate: G48, V49, S50, N53, R63, N79, and P80. Residue C110 participates in [4Fe-4S] cluster binding. Residues E129 and S130 each contribute to the (R)-5-phosphomevalonate site. 2 residues coordinate [4Fe-4S] cluster: C283 and C342. (R)-5-phosphomevalonate is bound at residue K361.

This sequence belongs to the AcnX type II large subunit family. As to quaternary structure, heterodimer composed of a large subunit (PMDh-L) and a small subunit (PMDh-S). It depends on [4Fe-4S] cluster as a cofactor.

It catalyses the reaction (R)-5-phosphomevalonate = (2E)-3-methyl-5-phosphooxypent-2-enoate + H2O. It participates in isoprenoid biosynthesis; isopentenyl diphosphate biosynthesis via mevalonate pathway. Its function is as follows. Component of a hydro-lyase that catalyzes the dehydration of mevalonate 5-phosphate (MVA5P) to form trans-anhydromevalonate 5-phosphate (tAHMP). Involved in the archaeal mevalonate (MVA) pathway, which provides fundamental precursors for isoprenoid biosynthesis, such as isopentenyl diphosphate (IPP) and dimethylallyl diphosphate (DMAPP). This chain is Phosphomevalonate dehydratase large subunit, found in Thermococcus kodakarensis (strain ATCC BAA-918 / JCM 12380 / KOD1) (Pyrococcus kodakaraensis (strain KOD1)).